Reading from the N-terminus, the 1082-residue chain is Protein argonaute 1A (1082 aa).

Disordered stretches follow at residues 17–148 and 187–208; these read MMRK…ASQD and GQSPTSQAIQPAPPSSKSVRFP. The segment covering 29–38 has biased composition (polar residues); the sequence is GESSGTQQAT. The span at 72–100 shows a compositional bias: gly residues; that stretch reads GRGGGQHQGRGGRYQGRGGPTSHQPGGGP. One can recognise a PAZ domain in the interval 420–533; it reads PVIDFVAQLL…LPMEVCKIVE (114 aa). In terms of domain architecture, Piwi spans 709–1030; that stretch reads LLIAILPDNN…AAFRARFYME (322 aa). The disordered stretch occupies residues 1036 to 1065; sequence SGSMASGAHTRGGGPLPGARSTKPAGNVAV.

This sequence belongs to the argonaute family. Ago subfamily.

Functionally, probably involved in the RNA silencing pathway. May bind to short RNAs such as microRNAs (miRNAs) or short interfering RNAs (siRNAs), and represses the translation of mRNAs which are complementary to them. This chain is Protein argonaute 1A (AGO1A), found in Oryza sativa subsp. japonica (Rice).